The primary structure comprises 312 residues: Sulfate adenylyltransferase subunit 2 (312 aa).

Belongs to the PAPS reductase family. CysD subfamily. In terms of assembly, heterodimer composed of CysD, the smaller subunit, and CysN.

The enzyme catalyses sulfate + ATP + H(+) = adenosine 5'-phosphosulfate + diphosphate. The protein operates within sulfur metabolism; hydrogen sulfide biosynthesis; sulfite from sulfate: step 1/3. With CysN forms the ATP sulfurylase (ATPS) that catalyzes the adenylation of sulfate producing adenosine 5'-phosphosulfate (APS) and diphosphate, the first enzymatic step in sulfur assimilation pathway. APS synthesis involves the formation of a high-energy phosphoric-sulfuric acid anhydride bond driven by GTP hydrolysis by CysN coupled to ATP hydrolysis by CysD. The chain is Sulfate adenylyltransferase subunit 2 from Methylobacterium nodulans (strain LMG 21967 / CNCM I-2342 / ORS 2060).